We begin with the raw amino-acid sequence, 127 residues long: Large ribosomal subunit protein bL17 (127 aa).

The protein belongs to the bacterial ribosomal protein bL17 family. Part of the 50S ribosomal subunit. Contacts protein L32.

This chain is Large ribosomal subunit protein bL17, found in Xanthomonas axonopodis pv. citri (strain 306).